We begin with the raw amino-acid sequence, 938 residues long: Mediator of RNA polymerase II transcription subunit 16 (938 aa).

Belongs to the Mediator complex subunit 16 family. In terms of assembly, component of the Mediator complex.

Its subcellular location is the nucleus. Functionally, component of the Mediator complex, a coactivator involved in the regulated transcription of nearly all RNA polymerase II-dependent genes. Mediator functions as a bridge to convey information from gene-specific regulatory proteins to the basal RNA polymerase II transcription machinery. Mediator is recruited to promoters by direct interactions with regulatory proteins and serves as a scaffold for the assembly of a functional preinitiation complex with RNA polymerase II and the general transcription factors. This is Mediator of RNA polymerase II transcription subunit 16 (SIN4) from Eremothecium gossypii (strain ATCC 10895 / CBS 109.51 / FGSC 9923 / NRRL Y-1056) (Yeast).